Reading from the N-terminus, the 186-residue chain is Ribosome-recycling factor (186 aa).

It belongs to the RRF family.

It is found in the cytoplasm. In terms of biological role, responsible for the release of ribosomes from messenger RNA at the termination of protein biosynthesis. May increase the efficiency of translation by recycling ribosomes from one round of translation to another. The chain is Ribosome-recycling factor from Polaromonas naphthalenivorans (strain CJ2).